The following is a 105-amino-acid chain: U2-lycotoxin-Ls1c (105 aa).

A signal peptide spans 1 to 17 (MIKYVLISALLVVAVYS). The propeptide occupies 18–41 (FTIEDSEDALLEEAEDELDTEEER). Disulfide bonds link Cys-51/Cys-67, Cys-58/Cys-97, Cys-60/Cys-83, and Cys-69/Cys-81.

Belongs to the neurotoxin 04 (omega-agtx) family. 01 (type I omega-agtx) subfamily. As to expression, expressed by the venom gland.

It is found in the secreted. Its function is as follows. Insecticidal to house crickets. It induces an excitatory slow-onset impact that leads to irreversible spastic paralysis. It also modifies human voltage-gated potassium channel Kv1.5/KCNA5. Most likely, it binds to the voltage-sensing domain of the channel, suggesting it does not block the pore but prevents its opening at physiological membrane potentials. The recombinant peptide binds to the channel in an irreversible manner and slows down the hKv1.5 current activation kinetics. It is not toxic to mice, when intracranially injected (at 0.5 ug/g mouse). The protein is U2-lycotoxin-Ls1c of Lycosa singoriensis (Wolf spider).